Here is a 118-residue protein sequence, read N- to C-terminus: Large ribosomal subunit protein bL19 (118 aa).

This sequence belongs to the bacterial ribosomal protein bL19 family.

Functionally, this protein is located at the 30S-50S ribosomal subunit interface and may play a role in the structure and function of the aminoacyl-tRNA binding site. This Lactiplantibacillus plantarum (strain ATCC BAA-793 / NCIMB 8826 / WCFS1) (Lactobacillus plantarum) protein is Large ribosomal subunit protein bL19.